Reading from the N-terminus, the 339-residue chain is MSSQPVTFQAPVAPIVPTAWPVDDVLALFNLPFNELMFRAQTVHREHFDPSEVELATLLSIKTGGCPEDCGYCPQAARYDTGVTAQKILPLEEVLTAAREAKAHGATRFCMGAAWREPKDRDLEKVEEMVREVKAMGMETCATLGMLGEGQAEKLKNAGLDYYNHNLDTAPEFYSNVISTRDYQNRIDTLARVRNVGIKVCCGGIVGMGESRLQRAGLIAQLCNMDPYPESVPVNNLVQVEGTPLHGTDPIDPLEFVRTVAVARITMPKARVRLSAGRREMGEAIQALCFVAGANSIFYGDKLLTTGNPEALADQELLEKLGMHTRSTAIDARCDVTPS.

Residues 51–278 form the Radical SAM core domain; that stretch reads SEVELATLLS…KARVRLSAGR (228 aa). Residues Cys66, Cys70, and Cys73 each contribute to the [4Fe-4S] cluster site. Residues Cys110, Cys141, Cys201, and Arg273 each contribute to the [2Fe-2S] cluster site.

Belongs to the radical SAM superfamily. Biotin synthase family. Homodimer. It depends on [4Fe-4S] cluster as a cofactor. Requires [2Fe-2S] cluster as cofactor.

It catalyses the reaction (4R,5S)-dethiobiotin + (sulfur carrier)-SH + 2 reduced [2Fe-2S]-[ferredoxin] + 2 S-adenosyl-L-methionine = (sulfur carrier)-H + biotin + 2 5'-deoxyadenosine + 2 L-methionine + 2 oxidized [2Fe-2S]-[ferredoxin]. The protein operates within cofactor biosynthesis; biotin biosynthesis; biotin from 7,8-diaminononanoate: step 2/2. Catalyzes the conversion of dethiobiotin (DTB) to biotin by the insertion of a sulfur atom into dethiobiotin via a radical-based mechanism. This chain is Biotin synthase, found in Herminiimonas arsenicoxydans.